A 72-amino-acid chain; its full sequence is Brevinin-2SN3 (72 aa).

The first 22 residues, 1-22 (MFTLKKPLLLLVFLGMISLSLC), serve as a signal peptide directing secretion. Positions 23–40 (QDERGADEDDGGEMTEEE) are cleaved as a propeptide — removed in mature form. Cys66 and Cys72 are oxidised to a cystine.

Belongs to the frog skin active peptide (FSAP) family. Brevinin subfamily. Expressed by the skin glands.

The protein localises to the secreted. In terms of biological role, antimicrobial peptide. Active against a variety of Gram-negative and Gram-positive bacterial strains. Active against fungus C.glabrata 090902 but not against C.albicans ATCC 10231. Shows hemolytic activity against human erythrocytes. The protein is Brevinin-2SN3 of Sylvirana spinulosa (Fine-spined frog).